The primary structure comprises 734 residues: Photosystem I P700 chlorophyll a apoprotein A2 (734 aa).

Transmembrane regions (helical) follow at residues 46 to 69, 135 to 158, 175 to 199, 273 to 291, 330 to 353, 369 to 395, 417 to 439, and 517 to 535; these read IFAS…FHVA, LYIG…LHLQ, LNHH…HVAI, IAHH…GHMY, LHFQ…QHMY, AALY…IFFI, AIIS…LYVH, and FLVH…LILV. [4Fe-4S] cluster contacts are provided by Cys-559 and Cys-568. A run of 2 helical transmembrane segments spans residues 575-596 and 643-665; these read AFYL…YWHW and LSVW…MFLI. Residues His-654, Met-662, and Tyr-670 each coordinate chlorophyll a. Phylloquinone is bound at residue Trp-671. A helical transmembrane segment spans residues 707-727; that stretch reads VVGLAHFSVGYVFTYAAFLIA.

The protein belongs to the PsaA/PsaB family. As to quaternary structure, the PsaA/B heterodimer binds the P700 chlorophyll special pair and subsequent electron acceptors. PSI consists of a core antenna complex that captures photons, and an electron transfer chain that converts photonic excitation into a charge separation. The eukaryotic PSI reaction center is composed of at least 11 subunits. It depends on P700 is a chlorophyll a/chlorophyll a' dimer, A0 is one or more chlorophyll a, A1 is one or both phylloquinones and FX is a shared 4Fe-4S iron-sulfur center. as a cofactor.

The protein localises to the plastid. Its subcellular location is the chloroplast thylakoid membrane. It catalyses the reaction reduced [plastocyanin] + hnu + oxidized [2Fe-2S]-[ferredoxin] = oxidized [plastocyanin] + reduced [2Fe-2S]-[ferredoxin]. Its function is as follows. PsaA and PsaB bind P700, the primary electron donor of photosystem I (PSI), as well as the electron acceptors A0, A1 and FX. PSI is a plastocyanin-ferredoxin oxidoreductase, converting photonic excitation into a charge separation, which transfers an electron from the donor P700 chlorophyll pair to the spectroscopically characterized acceptors A0, A1, FX, FA and FB in turn. Oxidized P700 is reduced on the lumenal side of the thylakoid membrane by plastocyanin. The protein is Photosystem I P700 chlorophyll a apoprotein A2 of Mesostigma viride (Green alga).